A 167-amino-acid chain; its full sequence is Signal peptidase complex catalytic subunit SEC11 (167 aa).

The Cytoplasmic portion of the chain corresponds to 1–9; that stretch reads MNLRFELQK. The chain crosses the membrane as a helical; Signal-anchor for type II membrane protein span at residues 10 to 30; sequence LLNVCFLFASAYMFWQGLAIA. Residues 31–167 lie on the Lumenal side of the membrane; it reads TNSASPIVVV…LGLSALLGGE (137 aa). Residues S44, H83, and D109 each act as charge relay system in the active site. N121 carries N-linked (GlcNAc...) asparagine glycosylation. The interval 153 to 164 is C-terminal short (CTS) helix; that stretch reads ALLGMLGLSALL.

The protein belongs to the peptidase S26B family. Component of the signal peptidase complex (SPC) composed of a catalytic subunit SEC11 and three accessory subunits SPC1, SPC2 and SPC3. The complex induces a local thinning of the ER membrane which is used to measure the length of the signal peptide (SP) h-region of protein substrates. This ensures the selectivity of the complex towards h-regions shorter than 18-20 amino acids. SPC associates with the translocon complex.

The protein resides in the endoplasmic reticulum membrane. The catalysed reaction is Cleavage of hydrophobic, N-terminal signal or leader sequences from secreted and periplasmic proteins.. Functionally, catalytic component of the signal peptidase complex (SPC) which catalyzes the cleavage of N-terminal signal sequences from nascent proteins as they are translocated into the lumen of the endoplasmic reticulum. Specifically cleaves N-terminal signal peptides that contain a hydrophobic alpha-helix (h-region) shorter than 18-20 amino acids. The chain is Signal peptidase complex catalytic subunit SEC11 (SEC11) from Saccharomyces cerevisiae (strain Lalvin QA23) (Baker's yeast).